Consider the following 620-residue polypeptide: EF-hand calcium-binding domain-containing protein 7 (620 aa).

Residues 1–24 form a disordered region; the sequence is MANHSSLPSQKYAASERQEYQKPQ. 2 consecutive EF-hand domains span residues 98 to 133 and 134 to 169; these read ATKN…KGEK and MSQE…TCEQ. Residues 176–234 are disordered; that stretch reads ERMDSNSKAKRQQFGSYIEKSPERSSSPKSSHGNLKLFDSETSTRKENKSSRPSSARSY. The segment covering 213 to 225 has biased composition (basic and acidic residues); that stretch reads FDSETSTRKENKS. One can recognise an EF-hand 3 domain in the interval 394–429; sequence EFKSALSDMFDIIDLDGNGLLSLAEYNFFEMRTSGE. Asp407, Asp409, Asn411, and Glu418 together coordinate Ca(2+).

The protein localises to the cell projection. Its subcellular location is the cilium membrane. In terms of biological role, plays a role in the ciliary Hedgehog (Hh) signaling. The sequence is that of EF-hand calcium-binding domain-containing protein 7 (efcab7) from Xenopus laevis (African clawed frog).